The chain runs to 383 residues: ATP phosphoribosyltransferase regulatory subunit (383 aa).

The protein belongs to the class-II aminoacyl-tRNA synthetase family. HisZ subfamily. Heteromultimer composed of HisG and HisZ subunits.

Its subcellular location is the cytoplasm. Its pathway is amino-acid biosynthesis; L-histidine biosynthesis; L-histidine from 5-phospho-alpha-D-ribose 1-diphosphate: step 1/9. Functionally, required for the first step of histidine biosynthesis. May allow the feedback regulation of ATP phosphoribosyltransferase activity by histidine. The protein is ATP phosphoribosyltransferase regulatory subunit of Paraburkholderia xenovorans (strain LB400).